We begin with the raw amino-acid sequence, 759 residues long: Olfactomedin-like protein 2B (759 aa).

Residues 1–20 form the signal peptide; the sequence is MAKSLLLVLCFALVTTLGWG. Coiled coils occupy residues 40-68 and 179-209; these read TEDETLQNEADNQENVLSQLLGDYDKVKA and KLEEEISKNLTKENEQIREDVEEIRTEMNKR. 2 N-linked (GlcNAc...) asparagine glycosylation sites follow: Asn-187 and Asn-213. Disordered stretches follow at residues 346–396 and 456–494; these read TRRP…VSAS and THTAPVPPPPVRTDSPGKDSTARQGTVPPGPTLSPEEED. Residues 356-396 are compositionally biased toward low complexity; it reads AAVTADAGTTSAGTPTTALPSARLPASTAAPSTPDPAVSAS. The Olfactomedin-like domain maps to 502-759; sequence RCKDTLSTIT…QVTYHVIFAY (258 aa). Cys-503 and Cys-689 are joined by a disulfide. Asn-704 carries N-linked (GlcNAc...) asparagine glycosylation.

Homodimer. Binds to heparin and chondroitin sulfate E. O-glycosylated and N-glycosylated.

The protein resides in the secreted. The sequence is that of Olfactomedin-like protein 2B (OLFML2B) from Bos taurus (Bovine).